The primary structure comprises 143 residues: Transcriptional regulator MraZ (143 aa).

SpoVT-AbrB domains lie at 5 to 47 and 76 to 119; these read EFLH…PMDE and AIEC…ANDA.

Belongs to the MraZ family. As to quaternary structure, forms oligomers.

The protein localises to the cytoplasm. It is found in the nucleoid. This is Transcriptional regulator MraZ from Oceanobacillus iheyensis (strain DSM 14371 / CIP 107618 / JCM 11309 / KCTC 3954 / HTE831).